We begin with the raw amino-acid sequence, 422 residues long: Adenylosuccinate synthetase (422 aa).

Residues 11 to 17 (GDEGKGK) and 39 to 41 (GHT) contribute to the GTP site. The active-site Proton acceptor is the aspartate 12. The Mg(2+) site is built by aspartate 12 and glycine 39. IMP is bound by residues 12–15 (DEGK), 37–40 (NAGH), threonine 129, arginine 143, asparagine 220, threonine 235, and arginine 299. Residue histidine 40 is the Proton donor of the active site. 295-301 (VTTGRKR) lines the substrate pocket. GTP contacts are provided by residues arginine 301, 327–329 (KLD), and 410–412 (GTG).

This sequence belongs to the adenylosuccinate synthetase family. Homodimer. Mg(2+) is required as a cofactor.

Its subcellular location is the cytoplasm. The catalysed reaction is IMP + L-aspartate + GTP = N(6)-(1,2-dicarboxyethyl)-AMP + GDP + phosphate + 2 H(+). Its pathway is purine metabolism; AMP biosynthesis via de novo pathway; AMP from IMP: step 1/2. Its function is as follows. Plays an important role in the de novo pathway and in the salvage pathway of purine nucleotide biosynthesis. Catalyzes the first committed step in the biosynthesis of AMP from IMP. In Arthroderma otae (strain ATCC MYA-4605 / CBS 113480) (Microsporum canis), this protein is Adenylosuccinate synthetase.